Here is a 420-residue protein sequence, read N- to C-terminus: Gamma-glutamyl phosphate reductase (420 aa).

Belongs to the gamma-glutamyl phosphate reductase family.

The protein localises to the cytoplasm. It carries out the reaction L-glutamate 5-semialdehyde + phosphate + NADP(+) = L-glutamyl 5-phosphate + NADPH + H(+). The protein operates within amino-acid biosynthesis; L-proline biosynthesis; L-glutamate 5-semialdehyde from L-glutamate: step 2/2. In terms of biological role, catalyzes the NADPH-dependent reduction of L-glutamate 5-phosphate into L-glutamate 5-semialdehyde and phosphate. The product spontaneously undergoes cyclization to form 1-pyrroline-5-carboxylate. The protein is Gamma-glutamyl phosphate reductase of Neisseria meningitidis serogroup C (strain 053442).